A 164-amino-acid chain; its full sequence is Endoribonuclease YbeY (164 aa).

Zn(2+)-binding residues include His-117, His-121, and His-127.

This sequence belongs to the endoribonuclease YbeY family. The cofactor is Zn(2+).

The protein resides in the cytoplasm. Single strand-specific metallo-endoribonuclease involved in late-stage 70S ribosome quality control and in maturation of the 3' terminus of the 16S rRNA. The sequence is that of Endoribonuclease YbeY from Mycoplasma capricolum subsp. capricolum (strain California kid / ATCC 27343 / NCTC 10154).